Reading from the N-terminus, the 1313-residue chain is Ataxin-2 (1313 aa).

Residues methionine 1–alanine 12 show a composition bias toward low complexity. A disordered region spans residues methionine 1–serine 255. The span at glycine 48–serine 65 shows a compositional bias: pro residues. Low complexity-rich tracts occupy residues phenylalanine 104–proline 114, alanine 141–proline 154, glutamine 166–glutamine 187, and leucine 204–threonine 234. Residues serine 235–arginine 244 are compositionally biased toward gly residues. Residue serine 248 is modified to Phosphoserine. Positions arginine 267–aspartate 344 constitute a Sm domain. Phosphoserine is present on residues serine 393, serine 466, serine 478, serine 508, and serine 554. 2 stretches are compositionally biased toward basic and acidic residues: residues alanine 459 to tyrosine 471 and serine 478 to lysine 492. 2 disordered regions span residues alanine 459–proline 954 and asparagine 1137–proline 1219. Over residues serine 508 to arginine 544 the composition is skewed to polar residues. The segment covering tryptophan 552 to arginine 562 has biased composition (pro residues). A compositionally biased stretch (low complexity) spans proline 563–proline 581. Over residues threonine 582–histidine 598 the composition is skewed to pro residues. Serine 624 carries the post-translational modification Phosphoserine. Basic residues predominate over residues alanine 627 to serine 637. Arginine 640 bears the Asymmetric dimethylarginine; alternate mark. Omega-N-methylarginine; alternate is present on arginine 640. Position 642 is a phosphoserine (serine 642). A compositionally biased stretch (low complexity) spans threonine 666–proline 681. Serine 684 is modified (phosphoserine). Residues proline 693 to serine 703 are compositionally biased toward polar residues. Serine 728 carries the post-translational modification Phosphoserine. Threonine 741 carries the post-translational modification Phosphothreonine. Residues proline 768–lysine 777 show a composition bias toward polar residues. Serine 772 and serine 784 each carry phosphoserine. The segment covering serine 788–phenylalanine 804 has biased composition (basic and acidic residues). Positions glutamine 807–asparagine 820 are enriched in polar residues. Basic and acidic residues predominate over residues lysine 821–phenylalanine 844. Positions asparagine 847–asparagine 871 are enriched in low complexity. Serine 856, serine 857, serine 861, serine 865, serine 867, serine 888, and serine 889 each carry phosphoserine. A compositionally biased stretch (polar residues) spans valine 880 to alanine 891. A Glycyl lysine isopeptide (Lys-Gly) (interchain with G-Cter in SUMO2) cross-link involves residue lysine 893. Over residues lysine 893–arginine 910 the composition is skewed to basic and acidic residues. 2 stretches are compositionally biased toward low complexity: residues serine 925–threonine 936 and glycine 1155–alanine 1192. Over residues threonine 1206–proline 1219 the composition is skewed to polar residues.

It belongs to the ataxin-2 family. Monomer. Can also form homodimers. Interacts with TARDBP; the interaction is RNA-dependent. Interacts with RBFOX1. Interacts with polyribosomes. Interacts with SH3GL2 and SH3GL3. Interacts with SH3KBP1 and CBL. Interacts with EGFR. Interacts with ATXN2L. Expressed in the brain, heart, liver, skeletal muscle, pancreas and placenta. Isoform 1 is predominant in the brain and spinal cord. Isoform 4 is more abundant in the cerebellum. In the brain, broadly expressed in the amygdala, caudate nucleus, corpus callosum, hippocampus, hypothalamus, substantia nigra, subthalamic nucleus and thalamus.

It localises to the cytoplasm. Its function is as follows. Involved in EGFR trafficking, acting as negative regulator of endocytic EGFR internalization at the plasma membrane. This Homo sapiens (Human) protein is Ataxin-2 (ATXN2).